The chain runs to 176 residues: Crossover junction endodeoxyribonuclease RuvC (176 aa).

Catalysis depends on residues Asp-7, Glu-67, and Asp-139. Mg(2+)-binding residues include Asp-7, Glu-67, and Asp-139.

The protein belongs to the RuvC family. In terms of assembly, homodimer which binds Holliday junction (HJ) DNA. The HJ becomes 2-fold symmetrical on binding to RuvC with unstacked arms; it has a different conformation from HJ DNA in complex with RuvA. In the full resolvosome a probable DNA-RuvA(4)-RuvB(12)-RuvC(2) complex forms which resolves the HJ. The cofactor is Mg(2+).

It localises to the cytoplasm. It catalyses the reaction Endonucleolytic cleavage at a junction such as a reciprocal single-stranded crossover between two homologous DNA duplexes (Holliday junction).. Its function is as follows. The RuvA-RuvB-RuvC complex processes Holliday junction (HJ) DNA during genetic recombination and DNA repair. Endonuclease that resolves HJ intermediates. Cleaves cruciform DNA by making single-stranded nicks across the HJ at symmetrical positions within the homologous arms, yielding a 5'-phosphate and a 3'-hydroxyl group; requires a central core of homology in the junction. The consensus cleavage sequence is 5'-(A/T)TT(C/G)-3'. Cleavage occurs on the 3'-side of the TT dinucleotide at the point of strand exchange. HJ branch migration catalyzed by RuvA-RuvB allows RuvC to scan DNA until it finds its consensus sequence, where it cleaves and resolves the cruciform DNA. This chain is Crossover junction endodeoxyribonuclease RuvC, found in Pelobacter propionicus (strain DSM 2379 / NBRC 103807 / OttBd1).